A 455-amino-acid chain; its full sequence is Bleomycin hydrolase (455 aa).

Active-site residues include C73, H372, and N396.

Belongs to the peptidase C1 family. In terms of assembly, homooctamer.

The protein localises to the cytoplasm. The catalysed reaction is Inactivates bleomycin B2 (a cytotoxic glycometallopeptide) by hydrolysis of a carboxyamide bond of beta-aminoalanine, but also shows general aminopeptidase activity. The specificity varies somewhat with source, but amino acid arylamides of Met, Leu and Ala are preferred.. The normal physiological role of BLM hydrolase is unknown, but it catalyzes the inactivation of the antitumor drug BLM (a glycopeptide) by hydrolyzing the carboxamide bond of its B-aminoalaninamide moiety thus protecting normal and malignant cells from BLM toxicity. In Gallus gallus (Chicken), this protein is Bleomycin hydrolase (BLMH).